Here is a 589-residue protein sequence, read N- to C-terminus: Muscarinic acetylcholine receptor M3 (589 aa).

Residues 1–66 are Extracellular-facing; sequence MTLHSNSTTS…DPLGGHTIWQ (66 aa). N6, N15, N41, N48, and N52 each carry an N-linked (GlcNAc...) asparagine glycan. A helical membrane pass occupies residues 67–90; it reads VVFIAFLTGFLALVTIIGNILVIV. The Cytoplasmic portion of the chain corresponds to 91 to 103; that stretch reads AFKVNKQLKTVNN. A helical membrane pass occupies residues 104-129; sequence YFLLSLACADLIIGVISMNLFTTYII. At 130–141 the chain is on the extracellular side; sequence MNRWALGNLACD. C140 and C220 are disulfide-bonded. A helical transmembrane segment spans residues 142 to 163; that stretch reads LWLSIDYVASNASVMNLLVISF. At 164 to 183 the chain is on the cytoplasmic side; sequence DRYFSITRPLTYRAKRTTKR. Residues 184-205 form a helical membrane-spanning segment; that stretch reads AGVMIGLAWVISFVLWAPAILF. The Extracellular portion of the chain corresponds to 206–228; that stretch reads WQYFVGKRTVPPGECFIQFLSEP. The helical transmembrane segment at 229–251 threads the bilayer; the sequence is TITFGTAIAAFYMPVTIMTILYW. Residues 252-490 lie on the Cytoplasmic side of the membrane; sequence RIYKETEKRT…SLIKEKKAAQ (239 aa). A Basolateral sorting signal motif is present at residues 274 to 280; the sequence is AEAENFV. Disordered regions lie at residues 275–295 and 323–356; these read EAENFVHPTGSSRSCSSYELQ and AEQMDQDHSSSDSWNNNDAAASLENSASSDEEDI. Over residues 283 to 295 the composition is skewed to polar residues; sequence TGSSRSCSSYELQ. Positions 333 to 344 are enriched in low complexity; it reads SDSWNNNDAAAS. Position 384 is a phosphoserine (S384). A helical transmembrane segment spans residues 491–513; sequence TLSAILLAFIITWTPYNIMVLVN. Residues 514 to 525 are Extracellular-facing; sequence TFCDSCIPKTYW. Cysteines 516 and 519 form a disulfide. The chain crosses the membrane as a helical span at residues 526 to 545; the sequence is NLGYWLCYINSTVNPVCYAL. The Cytoplasmic segment spans residues 546 to 589; the sequence is CNKTFRTTFKMLLLCQCDKRKRRKQQYQQRQSVIFHKRVPEQAL.

Belongs to the G-protein coupled receptor 1 family. Muscarinic acetylcholine receptor subfamily. CHRM3 sub-subfamily. As to quaternary structure, homodimer; the dimers can form tetramers. Interacts with NALCN. Interacts with TMEM147. Expressed in cerebral cortex, submandibular gland, hypothalamus, pancreas, liver, and ileum.

The protein localises to the cell membrane. The protein resides in the postsynaptic cell membrane. It localises to the basolateral cell membrane. Its subcellular location is the endoplasmic reticulum membrane. The muscarinic acetylcholine receptor mediates various cellular responses, including inhibition of adenylate cyclase, breakdown of phosphoinositides and modulation of potassium channels through the action of G proteins. Primary transducing effect is Pi turnover. This chain is Muscarinic acetylcholine receptor M3 (Chrm3), found in Mus musculus (Mouse).